Here is a 38-residue protein sequence, read N- to C-terminus: Large ribosomal subunit protein bL36 (38 aa).

The protein belongs to the bacterial ribosomal protein bL36 family.

This chain is Large ribosomal subunit protein bL36, found in Flavobacterium psychrophilum (strain ATCC 49511 / DSM 21280 / CIP 103535 / JIP02/86).